The chain runs to 388 residues: D-xylose dehydrogenase (388 aa).

It belongs to the Gfo/Idh/MocA family. As to quaternary structure, homotetramer. The cofactor is Zn(2+).

It carries out the reaction D-xylose + NADP(+) = D-xylono-1,5-lactone + NADPH + H(+). It catalyses the reaction D-xylose + NAD(+) = D-xylono-1,5-lactone + NADH + H(+). Its pathway is carbohydrate metabolism; D-xylose degradation. Catalyzes the NADP(+)-dependent oxidation of D-xylose. Is able to use both NADP(+) and NAD(+); however, the enzyme shows a very strong preference for NADP(+). Is likely involved in the first step of the oxidative D-xylose degradation pathway. This chain is D-xylose dehydrogenase (xdh), found in Paenarthrobacter nicotinovorans (Arthrobacter nicotinovorans).